Consider the following 155-residue polypeptide: Small ribosomal subunit protein bS6 (155 aa).

A disordered region spans residues 94–155; sequence VKQEGPLPTP…TPELEEQVKS (62 aa). The segment covering 103–112 has biased composition (polar residues); the sequence is PRSSNKSSNQ. The segment covering 113-141 has biased composition (basic and acidic residues); sequence AEKKENENIDSANKSEPKADETDNKKKIT.

It belongs to the bacterial ribosomal protein bS6 family.

Functionally, binds together with bS18 to 16S ribosomal RNA. The chain is Small ribosomal subunit protein bS6 from Prochlorococcus marinus (strain MIT 9515).